The chain runs to 169 residues: Probable glutathione peroxidase 2 (169 aa).

Cysteine 41 is a catalytic residue.

This sequence belongs to the glutathione peroxidase family. As to quaternary structure, interacts with DJ1A. Expressed in leaves, stems, flowers, green siliques and roots.

Its subcellular location is the cytoplasm. The protein resides in the cytosol. It is found in the nucleus. It carries out the reaction 2 glutathione + H2O2 = glutathione disulfide + 2 H2O. In terms of biological role, may constitute a glutathione peroxidase-like protective system against oxidative stresses. In Arabidopsis thaliana (Mouse-ear cress), this protein is Probable glutathione peroxidase 2 (GPX2).